The following is a 95-amino-acid chain: Putative pterin-4-alpha-carbinolamine dehydratase (95 aa).

The protein belongs to the pterin-4-alpha-carbinolamine dehydratase family.

It carries out the reaction (4aS,6R)-4a-hydroxy-L-erythro-5,6,7,8-tetrahydrobiopterin = (6R)-L-erythro-6,7-dihydrobiopterin + H2O. The chain is Putative pterin-4-alpha-carbinolamine dehydratase from Nocardia farcinica (strain IFM 10152).